The primary structure comprises 45 residues: Photosystem I reaction center subunit IX 1 (45 aa).

A helical transmembrane segment spans residues 9-29 (WFRSAPVVATIWITLTAGIIV).

It belongs to the PsaJ family.

The protein resides in the cellular thylakoid membrane. May help in the organization of the PsaE and PsaF subunits. This chain is Photosystem I reaction center subunit IX 1, found in Prochlorococcus marinus (strain NATL1A).